A 251-amino-acid polypeptide reads, in one-letter code: Phosphate import ATP-binding protein PstB 2 (251 aa).

The ABC transporter domain occupies 5-246 (ITSKDVHLSY…PKKQITSDYL (242 aa)). 37–44 (GPSGCGKS) contributes to the ATP binding site.

Belongs to the ABC transporter superfamily. Phosphate importer (TC 3.A.1.7) family. The complex is composed of two ATP-binding proteins (PstB), two transmembrane proteins (PstC and PstA) and a solute-binding protein (PstS).

The protein localises to the cell membrane. It catalyses the reaction phosphate(out) + ATP + H2O = ADP + 2 phosphate(in) + H(+). Its function is as follows. Part of the ABC transporter complex PstSACB involved in phosphate import. Responsible for energy coupling to the transport system. The chain is Phosphate import ATP-binding protein PstB 2 from Lactobacillus johnsonii (strain CNCM I-12250 / La1 / NCC 533).